We begin with the raw amino-acid sequence, 627 residues long: 5-aminolevulinate synthase, non-specific, mitochondrial (627 aa).

A mitochondrion-targeting transit peptide spans 1-58; sequence MDVIVRRCPFLARVPQAFFQQSKKSLAVYAQRCPFMMELASKPMAPSLARALCSSSSS. Substrate contacts are provided by Arg204, Ser321, and Lys340. 3 residues coordinate pyridoxal 5'-phosphate: Ser373, His401, and Thr429. Lys432 is an active-site residue. The residue at position 432 (Lys432) is an N6-(pyridoxal phosphate)lysine. Residues Thr461 and Thr462 each contribute to the pyridoxal 5'-phosphate site. Thr549 is a binding site for substrate.

It belongs to the class-II pyridoxal-phosphate-dependent aminotransferase family. In terms of assembly, homodimer. It depends on pyridoxal 5'-phosphate as a cofactor.

Its subcellular location is the mitochondrion inner membrane. The catalysed reaction is succinyl-CoA + glycine + H(+) = 5-aminolevulinate + CO2 + CoA. Its pathway is porphyrin-containing compound metabolism; protoporphyrin-IX biosynthesis; 5-aminolevulinate from glycine: step 1/1. Its function is as follows. Catalyzes the pyridoxal 5'-phosphate (PLP)-dependent condensation of succinyl-CoA and glycine to form aminolevulinic acid (ALA), with CoA and CO2 as by-products. The chain is 5-aminolevulinate synthase, non-specific, mitochondrial (alas1) from Opsanus tau (Oyster toadfish).